The sequence spans 270 residues: Aliphatic sulfonates import ATP-binding protein SsuB (270 aa).

One can recognise an ABC transporter domain in the interval 17-238 (LASKGLRKTF…ARGSHRLAAL (222 aa)). 49-56 (GRSGCGKS) serves as a coordination point for ATP. The tract at residues 248–270 (STPGTAPEPDPVAPLPTQLRWAH) is disordered.

The protein belongs to the ABC transporter superfamily. Aliphatic sulfonates importer (TC 3.A.1.17.2) family. As to quaternary structure, the complex is composed of two ATP-binding proteins (SsuB), two transmembrane proteins (SsuC) and a solute-binding protein (SsuA).

The protein localises to the cell inner membrane. It carries out the reaction ATP + H2O + aliphatic sulfonate-[sulfonate-binding protein]Side 1 = ADP + phosphate + aliphatic sulfonateSide 2 + [sulfonate-binding protein]Side 1.. Its function is as follows. Part of the ABC transporter complex SsuABC involved in aliphatic sulfonates import. Responsible for energy coupling to the transport system. This chain is Aliphatic sulfonates import ATP-binding protein SsuB, found in Pseudomonas putida (strain ATCC 47054 / DSM 6125 / CFBP 8728 / NCIMB 11950 / KT2440).